A 713-amino-acid chain; its full sequence is Polyribonucleotide nucleotidyltransferase (713 aa).

Mg(2+)-binding residues include Asp488 and Asp494. The KH domain maps to 555–614; the sequence is PQMEIIKVPTDKIRDVIGSGGKVIRGIVDETGAKVNIDDDGTVQISAMDRKSIDAAIKMI. The S1 motif domain occupies 624–692; the sequence is GEIYEGKVVS…ERGKVRLSMK (69 aa).

The protein belongs to the polyribonucleotide nucleotidyltransferase family. The cofactor is Mg(2+).

The protein localises to the cytoplasm. It catalyses the reaction RNA(n+1) + phosphate = RNA(n) + a ribonucleoside 5'-diphosphate. In terms of biological role, involved in mRNA degradation. Catalyzes the phosphorolysis of single-stranded polyribonucleotides processively in the 3'- to 5'-direction. This Hyphomonas neptunium (strain ATCC 15444) protein is Polyribonucleotide nucleotidyltransferase.